The sequence spans 130 residues: Small ribosomal subunit protein uS11c (130 aa).

This sequence belongs to the universal ribosomal protein uS11 family. Part of the 30S ribosomal subunit.

It is found in the plastid. Its subcellular location is the chloroplast. The protein is Small ribosomal subunit protein uS11c of Trieres chinensis (Marine centric diatom).